Here is a 367-residue protein sequence, read N- to C-terminus: Alanine racemase (367 aa).

The active-site Proton acceptor; specific for D-alanine is Lys-40. N6-(pyridoxal phosphate)lysine is present on Lys-40. Arg-136 is a binding site for substrate. Catalysis depends on Tyr-263, which acts as the Proton acceptor; specific for L-alanine. Position 310 (Met-310) interacts with substrate.

Belongs to the alanine racemase family. It depends on pyridoxal 5'-phosphate as a cofactor.

The enzyme catalyses L-alanine = D-alanine. It participates in amino-acid biosynthesis; D-alanine biosynthesis; D-alanine from L-alanine: step 1/1. Catalyzes the interconversion of L-alanine and D-alanine. May also act on other amino acids. In Lactococcus lactis subsp. lactis (strain IL1403) (Streptococcus lactis), this protein is Alanine racemase (alr).